The primary structure comprises 387 residues: Homoserine O-succinyltransferase (387 aa).

Positions 49–358 (NAILICHALS…DAEQGHDSFL (310 aa)) constitute an AB hydrolase-1 domain. S156 functions as the Nucleophile in the catalytic mechanism. R226 is a binding site for substrate. Residues D321 and H354 contribute to the active site. A substrate-binding site is contributed by D355.

Belongs to the AB hydrolase superfamily. MetX family. In terms of assembly, homodimer.

The protein resides in the cytoplasm. The catalysed reaction is L-homoserine + succinyl-CoA = O-succinyl-L-homoserine + CoA. It participates in amino-acid biosynthesis; L-methionine biosynthesis via de novo pathway; O-succinyl-L-homoserine from L-homoserine: step 1/1. Its activity is regulated as follows. Requires MetW for activity. In terms of biological role, transfers a succinyl group from succinyl-CoA to L-homoserine, forming succinyl-L-homoserine. The polypeptide is Homoserine O-succinyltransferase (Acinetobacter baylyi (strain ATCC 33305 / BD413 / ADP1)).